A 132-amino-acid chain; its full sequence is MSMTDPIADFLTRIRNANMVRHESLEVPASKIKRDIAEILKREGFIRNVEYIDDDKQGIIRVFLKYGKDNQRVISGLKRISKPGLRSYVKADAVPKVLNGLGIAIISTSEGVVTDKEARAKKIGGEVLAYVW.

It belongs to the universal ribosomal protein uS8 family. In terms of assembly, part of the 30S ribosomal subunit. Contacts proteins S5 and S12.

One of the primary rRNA binding proteins, it binds directly to 16S rRNA central domain where it helps coordinate assembly of the platform of the 30S subunit. The polypeptide is Small ribosomal subunit protein uS8 (Levilactobacillus brevis (strain ATCC 367 / BCRC 12310 / CIP 105137 / JCM 1170 / LMG 11437 / NCIMB 947 / NCTC 947) (Lactobacillus brevis)).